The primary structure comprises 430 residues: Mitochondrial distribution and morphology protein 12 (430 aa).

The 430-residue stretch at 1–430 (MSIDIDWERA…VYPSFWTFLI (430 aa)) folds into the SMP-LTD domain. Disordered regions lie at residues 61-117 (DLSD…YESN), 177-276 (TPLG…RMRE), and 352-377 (MGPETAGGGGGGDTSEPNSSRRKPSS). A compositionally biased stretch (acidic residues) spans 69 to 82 (FYEDDDENFSDSSE). Over residues 85–96 (SPTREPVDRYGN) the composition is skewed to basic and acidic residues. Composition is skewed to polar residues over residues 211–233 (SAQSRPSTANTGNTLPSRDSMSI) and 241–251 (ASQGMPNNQGQ). Basic and acidic residues predominate over residues 265–276 (PLDDTPPRRMRE).

The protein belongs to the MDM12 family. As to quaternary structure, component of the ER-mitochondria encounter structure (ERMES) or MDM complex, composed of MMM1, MDM10, MDM12 and MDM34. An MMM1 homodimer associates with one molecule of MDM12 on each side in a pairwise head-to-tail manner, and the SMP-LTD domains of MMM1 and MDM12 generate a continuous hydrophobic tunnel for phospholipid trafficking.

The protein localises to the mitochondrion outer membrane. Its subcellular location is the endoplasmic reticulum membrane. Functionally, component of the ERMES/MDM complex, which serves as a molecular tether to connect the endoplasmic reticulum (ER) and mitochondria. Components of this complex are involved in the control of mitochondrial shape and protein biogenesis, and function in nonvesicular lipid trafficking between the ER and mitochondria. MDM12 is required for the interaction of the ER-resident membrane protein MMM1 and the outer mitochondrial membrane-resident beta-barrel protein MDM10. The MDM12-MMM1 subcomplex functions in the major beta-barrel assembly pathway that is responsible for biogenesis of all mitochondrial outer membrane beta-barrel proteins, and acts in a late step after the SAM complex. The MDM10-MDM12-MMM1 subcomplex further acts in the TOM40-specific pathway after the action of the MDM12-MMM1 complex. Essential for establishing and maintaining the structure of mitochondria and maintenance of mtDNA nucleoids. This chain is Mitochondrial distribution and morphology protein 12, found in Ajellomyces capsulatus (strain G186AR / H82 / ATCC MYA-2454 / RMSCC 2432) (Darling's disease fungus).